A 471-amino-acid polypeptide reads, in one-letter code: 3-hydroxylaminophenol mutase (471 aa).

The 86-residue stretch at 15-100 (NDVKFVDFRF…TCDVVEPSDG (86 aa)) folds into the GS beta-grasp domain. The GS catalytic domain maps to 107–471 (PRSIAKRAEA…PVEFEMYYSL (365 aa)).

Belongs to the glutamine synthetase family.

It carries out the reaction 3-hydroxyaminophenol = aminohydroquinone. With respect to regulation, is inhibited by H(2)O(2). 1,10-phenanthroline inhibits the activity slightly, but other metal cation chelators such as EDTA or tiron have no effect on the activity. Divalent metal cations and hydroxylamine have also no effect on the activity. Due to the relationship of the protein with glutamine synthetases, glutamate and glutamine were tested as inhibitors; neither preincubation of the compounds with the enzyme nor their addition to the assay buffer affected 3HAP mutase activity. In terms of biological role, catalyzes the isomerization of 3-hydroxylaminophenol (3HAP) to aminohydroquinone, a step in the degradative pathway of 3-nitrophenol. The enzymatic reaction is regiospecific since it leads to the formation of aminohydroquinone exclusively, without producing the isomeric 4-aminocatechol. Can also isomerize other hydroxylaminoaromatic compounds, such as hydroxylaminobenzene to a mixture of 2-aminophenol and 4-aminophenol, 4-hydroxylaminotoluene to 6-amino-m-cresol, and 2-chloro-5-hydroxylaminophenol to 2-amino-5-chlorohydroquinone. Does not act on 4-hydroxylaminobenzoate. In Cupriavidus pinatubonensis (strain JMP 134 / LMG 1197) (Cupriavidus necator (strain JMP 134)), this protein is 3-hydroxylaminophenol mutase.